We begin with the raw amino-acid sequence, 600 residues long: Prostaglandin G/H synthase 1 (600 aa).

An N-terminal signal peptide occupies residues M1–S24. The region spanning P32 to T70 is the EGF-like domain. 4 disulfide bridges follow: C36-C47, C37-C159, C41-C57, and C59-C69. A glycan (N-linked (GlcNAc...) asparagine) is linked at N68. 4 consecutive transmembrane segments (helical) span residues I74–L82, P86–L92, R97–A105, and I108–N122. N144 is a glycosylation site (N-linked (GlcNAc...) asparagine). H207 (proton acceptor) is an active-site residue. Y385 (for cyclooxygenase activity) is an active-site residue. H388 lines the heme b pocket. N-linked (GlcNAc...) asparagine glycosylation is present at N410. C569 and C575 are disulfide-bonded.

This sequence belongs to the prostaglandin G/H synthase family. As to quaternary structure, homodimer. It depends on heme b as a cofactor.

The protein resides in the endoplasmic reticulum membrane. It is found in the microsome membrane. The catalysed reaction is (5Z,8Z,11Z,14Z)-eicosatetraenoate + AH2 + 2 O2 = prostaglandin H2 + A + H2O. The enzyme catalyses (5Z,8Z,11Z,14Z)-eicosatetraenoate + 2 O2 = prostaglandin G2. It catalyses the reaction prostaglandin G2 + AH2 = prostaglandin H2 + A + H2O. It carries out the reaction (9Z,12Z)-octadecadienoate + AH2 + O2 = (9R)-hydroxy-(10E,12Z)-octadecadienoate + A + H2O. The catalysed reaction is (9Z,12Z)-octadecadienoate + AH2 + O2 = (9S)-hydroxy-(10E,12Z)-octadecadienoate + A + H2O. The enzyme catalyses (9Z,12Z)-octadecadienoate + AH2 + O2 = (13S)-hydroxy-(9Z,11E)-octadecadienoate + A + H2O. It catalyses the reaction (9Z,12Z)-octadecadienoate + AH2 + O2 = (13R)-hydroxy-(9Z,11E)-octadecadienoate + A + H2O. It participates in lipid metabolism; prostaglandin biosynthesis. Its activity is regulated as follows. The cyclooxygenase activity is inhibited by nonsteroidal anti-inflammatory drugs (NSAIDs) including ibuprofen, flurbiprofen, ketoprofen, naproxen, flurbiprofen, anirolac, fenclofenac and diclofenac. Functionally, dual cyclooxygenase and peroxidase that plays an important role in the biosynthesis pathway of prostanoids, a class of C20 oxylipins mainly derived from arachidonate ((5Z,8Z,11Z,14Z)-eicosatetraenoate, AA, C20:4(n-6)), with a particular role in the inflammatory response. The cyclooxygenase activity oxygenates AA to the hydroperoxy endoperoxide prostaglandin G2 (PGG2), and the peroxidase activity reduces PGG2 to the hydroxy endoperoxide prostaglandin H2 (PGH2), the precursor of all 2-series prostaglandins and thromboxanes. This complex transformation is initiated by abstraction of hydrogen at carbon 13 (with S-stereochemistry), followed by insertion of molecular O2 to form the endoperoxide bridge between carbon 9 and 11 that defines prostaglandins. The insertion of a second molecule of O2 (bis-oxygenase activity) yields a hydroperoxy group in PGG2 that is then reduced to PGH2 by two electrons. Involved in the constitutive production of prostanoids in particular in the stomach and platelets. In gastric epithelial cells, it is a key step in the generation of prostaglandins, such as prostaglandin E2 (PGE2), which plays an important role in cytoprotection. In platelets, it is involved in the generation of thromboxane A2 (TXA2), which promotes platelet activation and aggregation, vasoconstriction and proliferation of vascular smooth muscle cells. Can also use linoleate (LA, (9Z,12Z)-octadecadienoate, C18:2(n-6)) as substrate and produce hydroxyoctadecadienoates (HODEs) in a regio- and stereospecific manner, being (9R)-HODE ((9R)-hydroxy-(10E,12Z)-octadecadienoate) and (13S)-HODE ((13S)-hydroxy-(9Z,11E)-octadecadienoate) its major products. This is Prostaglandin G/H synthase 1 (PTGS1) from Ovis aries (Sheep).